The chain runs to 320 residues: Mitochondrial glycine transporter (320 aa).

Solcar repeat units follow at residues 8–92, 121–205, and 223–307; these read SKTT…LRQG, LSNW…LKRR, and SSSS…LILR. A run of 6 helical transmembrane segments spans residues 14–39, 67–93, 127–152, 180–203, 227–253, and 282–300; these read FAAG…TRVQ, GTLP…RQGL, LATG…VRYE, GFGA…EQLK, INFV…KTRL, and GLGL…AWTV.

The protein belongs to the mitochondrial carrier (TC 2.A.29) family. SLC25A38 subfamily.

Its subcellular location is the mitochondrion inner membrane. It carries out the reaction glycine(in) = glycine(out). In terms of biological role, mitochondrial glycine transporter that imports glycine into the mitochondrial matrix. Plays an important role in providing glycine for the first enzymatic step in heme biosynthesis, the condensation of glycine with succinyl-CoA to produce 5-aminolevulinate (ALA) in the mitochondrial matrix. This is Mitochondrial glycine transporter from Aspergillus fumigatus (strain CBS 144.89 / FGSC A1163 / CEA10) (Neosartorya fumigata).